The following is an 86-amino-acid chain: RNA-binding protein Hfq (86 aa).

The Sm domain maps to 12 to 73 (DIFLNQVRKE…ISTISPQKPV (62 aa)).

This sequence belongs to the Hfq family. In terms of assembly, homohexamer.

Functionally, RNA chaperone that binds small regulatory RNA (sRNAs) and mRNAs to facilitate mRNA translational regulation in response to envelope stress, environmental stress and changes in metabolite concentrations. Also binds with high specificity to tRNAs. This Caldanaerobacter subterraneus subsp. tengcongensis (strain DSM 15242 / JCM 11007 / NBRC 100824 / MB4) (Thermoanaerobacter tengcongensis) protein is RNA-binding protein Hfq.